We begin with the raw amino-acid sequence, 286 residues long: Shikimate dehydrogenase (NADP(+)) (286 aa).

Shikimate contacts are provided by residues 22-24 (SFS) and threonine 69. Catalysis depends on lysine 73, which acts as the Proton acceptor. An NADP(+)-binding site is contributed by glutamate 85. Residues asparagine 94 and aspartate 109 each contribute to the shikimate site. NADP(+) is bound by residues 133 to 137 (GAGGA), 157 to 162 (NRTIDK), and leucine 231. Tyrosine 233 contacts shikimate. Glycine 254 lines the NADP(+) pocket.

The protein belongs to the shikimate dehydrogenase family. Homodimer.

It carries out the reaction shikimate + NADP(+) = 3-dehydroshikimate + NADPH + H(+). It functions in the pathway metabolic intermediate biosynthesis; chorismate biosynthesis; chorismate from D-erythrose 4-phosphate and phosphoenolpyruvate: step 4/7. Involved in the biosynthesis of the chorismate, which leads to the biosynthesis of aromatic amino acids. Catalyzes the reversible NADPH linked reduction of 3-dehydroshikimate (DHSA) to yield shikimate (SA). This is Shikimate dehydrogenase (NADP(+)) from Alkaliphilus oremlandii (strain OhILAs) (Clostridium oremlandii (strain OhILAs)).